A 393-amino-acid chain; its full sequence is Zinc finger CCHC domain-containing protein 18 (393 aa).

Disordered stretches follow at residues 281–300 (VEPEDPPLSSPGASSLRGTA) and 313–341 (DDFDEESPSTSSGSGQRNNGPGDLGRTRK). Polar residues-rich tracts occupy residues 291–300 (PGASSLRGTA) and 320–331 (PSTSSGSGQRNN). The CCHC-type zinc-finger motif lies at 346–363 (IRCPHCGEEGHAKETCDN).

The protein belongs to the ZCCHC12 family.

In Mus musculus (Mouse), this protein is Zinc finger CCHC domain-containing protein 18.